The chain runs to 479 residues: RHO1 GEF localizing protein 1 (479 aa).

The disordered stretch occupies residues 460 to 479; the sequence is SQKDPSRTDPSKLRRVPVIQ.

Functionally, regulator of RHO1 signaling that acts as a cofactor required for the efficient localization of the TUS1 GTP exchange factor (GEF) for RHO1 to the bud neck during all phases of cytokinesis. RHO1 is a key, essential hub protein in the cell wall integrity (CWI) pathway in which activated RHO1-GTP binds directly to and activates multiple different downstream effectors required for cell wall synthesis and actin assembly during cytokinesis. In Saccharomyces cerevisiae (strain ATCC 204508 / S288c) (Baker's yeast), this protein is RHO1 GEF localizing protein 1.